A 415-amino-acid chain; its full sequence is Gamma-glutamyl phosphate reductase (415 aa).

This sequence belongs to the gamma-glutamyl phosphate reductase family.

Its subcellular location is the cytoplasm. It carries out the reaction L-glutamate 5-semialdehyde + phosphate + NADP(+) = L-glutamyl 5-phosphate + NADPH + H(+). Its pathway is amino-acid biosynthesis; L-proline biosynthesis; L-glutamate 5-semialdehyde from L-glutamate: step 2/2. In terms of biological role, catalyzes the NADPH-dependent reduction of L-glutamate 5-phosphate into L-glutamate 5-semialdehyde and phosphate. The product spontaneously undergoes cyclization to form 1-pyrroline-5-carboxylate. The sequence is that of Gamma-glutamyl phosphate reductase from Bacillus thuringiensis subsp. konkukian (strain 97-27).